The following is a 281-amino-acid chain: Probable endonuclease 4 (281 aa).

The Zn(2+) site is built by His-69, His-109, Glu-145, Asp-179, His-182, His-216, Asp-229, His-231, and Glu-261.

The protein belongs to the AP endonuclease 2 family. It depends on Zn(2+) as a cofactor.

The enzyme catalyses Endonucleolytic cleavage to 5'-phosphooligonucleotide end-products.. Functionally, endonuclease IV plays a role in DNA repair. It cleaves phosphodiester bonds at apurinic or apyrimidinic (AP) sites, generating a 3'-hydroxyl group and a 5'-terminal sugar phosphate. In Aeromonas hydrophila subsp. hydrophila (strain ATCC 7966 / DSM 30187 / BCRC 13018 / CCUG 14551 / JCM 1027 / KCTC 2358 / NCIMB 9240 / NCTC 8049), this protein is Probable endonuclease 4.